A 135-amino-acid polypeptide reads, in one-letter code: Small ribosomal subunit protein uS9 (135 aa).

The segment covering 108–118 (VGDPRRTEPHK) has biased composition (basic and acidic residues). The interval 108 to 135 (VGDPRRTEPHKPNRSTKGPRAKRQKSYR) is disordered. The segment covering 119 to 135 (PNRSTKGPRAKRQKSYR) has biased composition (basic residues).

It belongs to the universal ribosomal protein uS9 family.

This is Small ribosomal subunit protein uS9 (rps9) from Pyrococcus abyssi (strain GE5 / Orsay).